The sequence spans 290 residues: Short neuropeptide F (290 aa).

The first 32 residues, 1-32 (MFRFNPQLSHGCALALICCLLNLLMMHQPTNA), serve as a signal peptide directing secretion. Residues 33-87 (ELSPVVQGEFFLPILPDDHPPNTDTSFGGPISNLYDNLLQREYAGPVVFPNHQVE) constitute a propeptide that is removed on maturation. Residues F100 and F134 each carry the phenylalanine amide modification. Positions 138–290 (DPTLPQMRRT…IETSSIAPKN (153 aa)) are excised as a propeptide. The tract at residues 238-290 (VAGYANDGDDTEAQLDEDTSEFQREARKPMRLRWGRSTGKAPQIETSSIAPKN) is disordered. The span at 244 to 257 (DGDDTEAQLDEDTS) shows a compositional bias: acidic residues. Polar residues predominate over residues 281–290 (IETSSIAPKN).

It belongs to the NPY family.

The protein localises to the secreted. Functionally, plays a role in controlling food intake and regulating body size. In Drosophila pseudoobscura pseudoobscura (Fruit fly), this protein is Short neuropeptide F.